A 287-amino-acid chain; its full sequence is Phycobilisome 32.1 kDa linker polypeptide, phycocyanin-associated, rod (287 aa).

The PBS-linker domain occupies 2 to 180 (AITAAASRLG…LYRGYANSDR (179 aa)). A CpcD-like domain is found at 235-287 (GRVYRIEVAGIRQPGYPGVRRSSTAFLVPYEQLSAKMQQLQRTGARIISVNPA).

This sequence belongs to the phycobilisome linker protein family.

Its subcellular location is the cellular thylakoid membrane. Its function is as follows. Rod linker protein, associated with phycocyanin. Linker polypeptides determine the state of aggregation and the location of the disk-shaped phycobiliprotein units within the phycobilisome and modulate their spectroscopic properties in order to mediate a directed and optimal energy transfer. The protein is Phycobilisome 32.1 kDa linker polypeptide, phycocyanin-associated, rod (cpcC) of Thermosynechococcus vestitus (strain NIES-2133 / IAM M-273 / BP-1).